The sequence spans 566 residues: E3 ubiquitin-protein ligase RNF220 (566 aa).

Lys-277 is covalently cross-linked (Glycyl lysine isopeptide (Lys-Gly) (interchain with G-Cter in SUMO2)). The tract at residues 277 to 297 (KREGESPTASPHSSATDDLHH) is disordered. Phosphoserine is present on Ser-390. The stretch at 485–513 (EDSAVTTFEALKARVRELERQLSRGDRYK) forms a coiled coil. A required for targeting to the cytoplasm region spans residues 514-522 (CLICMDSYS). An RING-type zinc finger spans residues 514–553 (CLICMDSYSMPLTSIQCWHVHCEECWLRTLGAKKLCPQCN).

Interacts with SIN3B. Interacts with CTNNB1 (via Armadillo repeats 2-8). Interacts with USP7 (via MATH domain). Auto-ubiquitinated; leads to proteasomal degradation. In terms of tissue distribution, ubiquitously expressed. Abundant in brain and spinal cord, particularly in the cerebellum and cerebral cortex. In fetal tissues expressed in the cerebellum, spinal cord and cortex.

It localises to the cytoplasm. It is found in the nucleus. The catalysed reaction is S-ubiquitinyl-[E2 ubiquitin-conjugating enzyme]-L-cysteine + [acceptor protein]-L-lysine = [E2 ubiquitin-conjugating enzyme]-L-cysteine + N(6)-ubiquitinyl-[acceptor protein]-L-lysine.. It participates in protein modification; protein ubiquitination. In terms of biological role, E3 ubiquitin-protein ligase that promotes the ubiquitination and proteasomal degradation of SIN3B. Independently of its E3 ligase activity, acts as a CTNNB1 stabilizer through USP7-mediated deubiquitination of CTNNB1 promoting Wnt signaling. Plays a critical role in the regulation of nuclear lamina. This is E3 ubiquitin-protein ligase RNF220 (RNF220) from Homo sapiens (Human).